A 179-amino-acid polypeptide reads, in one-letter code: Transcriptional repressor NrdR (179 aa).

A zinc finger spans residues 3-34 (CPYCQHTNSRVLESRSSEGGQSIRRRRECLCC). Positions 49–139 (ITVIKHDGKK…VYGRFQGIKD (91 aa)) constitute an ATP-cone domain. The interval 160-179 (KPANDDFSEQETPSTVMMPS) is disordered. Residues 169–179 (QETPSTVMMPS) are compositionally biased toward polar residues.

This sequence belongs to the NrdR family. Zn(2+) serves as cofactor.

Negatively regulates transcription of bacterial ribonucleotide reductase nrd genes and operons by binding to NrdR-boxes. The protein is Transcriptional repressor NrdR of Rippkaea orientalis (strain PCC 8801 / RF-1) (Cyanothece sp. (strain PCC 8801)).